Here is a 728-residue protein sequence, read N- to C-terminus: FAD-dependent monooxygenase avaB (728 aa).

A helical transmembrane segment spans residues V17 to K37. Residues N50–Q64 show a composition bias toward polar residues. Residues N50–T72 form a disordered region. V168 serves as a coordination point for FAD. Residue D490–L491 participates in NADP(+) binding.

The protein belongs to the FAD-binding monooxygenase family. FAD serves as cofactor.

The protein localises to the membrane. Its pathway is secondary metabolite metabolism. In terms of biological role, multifunctional FAD-dependent monooxygenase; part of the cluster that mediates the biosynthesis of a highly modified cyclo-arginine-tryptophan dipeptide (cRW). Within the pathway, avaB uses the avaA cyclo-arginine-tryptophan dipeptide (cRW) as substrate to generate the cyclo-Arg-formylkynurenine diketopiperazine (DKP). AvaB also catalyzes an additional N-oxidation of the avaC product which is followed by cyclization and dehydration. The first step of the pathway is perfornmed by the arginine-containing cyclodipeptide synthase (RCPDS) avaA that acts as the scaffold-generating enzyme and is responsible for formation of the cyclo-Arg-Trp (cRW) diketopiperazine. AvaB then acts as a multifunctional flavoenzyme that is responsible for generating the cyclo-Arg-formylkynurenine DKP, which can be deformylated by avaC. AvaB then further catalyzes an additional N-oxidation followed by cyclization and dehydration. The next step is an N-acetylation of the guanidine group catalyzed by the arginine N-acetyltransferase avaD. The roles of the additional enzymes identified within the ava cluster still have to be determined. This Aspergillus versicolor protein is FAD-dependent monooxygenase avaB.